The primary structure comprises 84 residues: MKGMILFISCLLLIGIVVECKEGYLMDHEGCKLSCFIRPSGYCGRECGIKKGSSGYCAWPACYCYGLPNWVKVWDRATNKCGKK.

Positions 1–20 (MKGMILFISCLLLIGIVVEC) are cleaved as a signal peptide. The LCN-type CS-alpha/beta domain maps to 21-82 (KEGYLMDHEG…VWDRATNKCG (62 aa)). Disulfide bonds link Cys31–Cys81, Cys35–Cys57, Cys43–Cys62, and Cys47–Cys64. A Cysteine amide modification is found at Cys81.

It belongs to the long (4 C-C) scorpion toxin superfamily. Sodium channel inhibitor family. C-terminal amidation is important for high activity. As to expression, expressed by the venom gland.

It localises to the secreted. In terms of biological role, voltage-gated sodium channels (Nav) gating-modifier. Acts both as alpha- and beta-toxin, since it affects not only activation but also inactivation of Nav channels. Binds to Nav domain DII and impairs the four Nav channel voltage sensors movements. Depending on Nav channel subtypes tested, can also bind Nav domains DIII (low affinity) and DIV (very low affinity). Acts on almost all the Nav channels tested (mammalian Nav1.2/SCN2A, Nav1.3/SCN3A, Nav1.4/SCN4A, Nav1.5/SCN5A, Nav1.6/SCN8A, Nav1.9/SCN11A, and insect DmNav1). Is highly active against both mammals and insects. Irreversibly modulates DmNav channels. Other Ts1 activities have been studied, such as immunomodulation, antimicrobial activity or exocrine secretion. This toxin exhibits an antifungal activity against filamentous fungi. In vitro, it has an important immunomodulatory effect on macrophages by stimulating the release of pro-inflammatory cytokines. It also shows an activity in exocrine secretion in pancreas, stomach and adrenal gland. This is Beta-mammal/insect toxin Ts1 from Tityus serrulatus (Brazilian scorpion).